Here is a 306-residue protein sequence, read N- to C-terminus: Dermonecrotic toxin LiSicTox-alphaIA1a (306 aa).

The signal sequence occupies residues 1-18 (MLPYIVLVLGCWSVLSQA). The propeptide occupies 19–26 (AQTDDEER). Residue His38 is part of the active site. Mg(2+) contacts are provided by Glu58 and Asp60. Residue His74 is the Nucleophile of the active site. Disulfide bonds link Cys78/Cys84 and Cys80/Cys223. Mg(2+) is bound at residue Asp118.

The protein belongs to the arthropod phospholipase D family. Class II subfamily. Class IIa sub-subfamily. It depends on Mg(2+) as a cofactor. Expressed by the venom gland.

Its subcellular location is the secreted. It carries out the reaction an N-(acyl)-sphingosylphosphocholine = an N-(acyl)-sphingosyl-1,3-cyclic phosphate + choline. The enzyme catalyses an N-(acyl)-sphingosylphosphoethanolamine = an N-(acyl)-sphingosyl-1,3-cyclic phosphate + ethanolamine. It catalyses the reaction a 1-acyl-sn-glycero-3-phosphocholine = a 1-acyl-sn-glycero-2,3-cyclic phosphate + choline. The catalysed reaction is a 1-acyl-sn-glycero-3-phosphoethanolamine = a 1-acyl-sn-glycero-2,3-cyclic phosphate + ethanolamine. It carries out the reaction 1-hexadecanoyl-sn-glycero-3-phosphocholine = 1-hexadecanoyl-sn-glycero-2,3-cyclic phosphate + choline. Its activity is regulated as follows. Catalytic activity and hemolysis are inhibited by divalent ion chelators (1,10-phenanthroline, EDTA, and EGTA). In terms of biological role, dermonecrotic toxins cleave the phosphodiester linkage between the phosphate and headgroup of certain phospholipids (sphingolipid and lysolipid substrates), forming an alcohol (often choline) and a cyclic phosphate. This toxin acts on sphingomyelin (SM) with high activity. It discriminate between the number of carbon atoms in the substrates, since it prefers SM with six carbons in the fatty acid chain (SM6:0) to other SMs (SM12:0 &gt; SM16:0 &gt; SM18:0 &gt; SM2:0 &gt; SM24:0). It also acts on lysophosphatidylcholine (LPC) (LPC16:0 = LPC12:0 &gt; LPC18:0), and lyso-platelet activating factor (LPAF, an alkyl-LPC) but not on phosphatidylcholine (PC). It may also act on ceramide phosphoethanolamine (CPE), lysophosphatidylcholine (LPC) and lysophosphatidylethanolamine (LPE), but not on lysophosphatidylserine (LPS), and lysophosphatidylglycerol (LPG). It acts by transphosphatidylation, releasing exclusively cyclic phosphate products as second products. In vivo, it induces dermonecrosis, vascular permeability, platelet aggregation, inflammatory response, edema and cytotoxicity against renal epithelial cells. It causes direct nephrotoxicity and is directly toxic to liver. It also induces hemolysis in a complement-dependent manner as well as in a complement-independent manner. The hemolysis provoked in a complement-independent manner is composed of several steps. The toxin binds to erythrocyte membranes, hydrolyzes membrane phospholipids (SM and LPC) thus generating metabolism products that cause hemolysis, probably by provoking an increase of calcium inside cells. The calcium influx is due to the opening of L-type calcium channels, since L-type calcium channel blockers inhibit calcium influx. Is lethal to mice when intraperitoneally injected. The polypeptide is Dermonecrotic toxin LiSicTox-alphaIA1a (Loxosceles intermedia (Brown spider)).